The primary structure comprises 307 residues: Protoheme IX farnesyltransferase (307 aa).

8 consecutive transmembrane segments (helical) span residues asparagine 38 to leucine 58, phenylalanine 65 to isoleucine 85, proline 108 to leucine 128, proline 131 to tryptophan 151, leucine 158 to isoleucine 178, isoleucine 186 to alanine 206, leucine 251 to phenylalanine 271, and phenylalanine 287 to phenylalanine 307.

Belongs to the UbiA prenyltransferase family. Protoheme IX farnesyltransferase subfamily. In terms of assembly, interacts with CtaA.

It localises to the cell membrane. It catalyses the reaction heme b + (2E,6E)-farnesyl diphosphate + H2O = Fe(II)-heme o + diphosphate. Its pathway is porphyrin-containing compound metabolism; heme O biosynthesis; heme O from protoheme: step 1/1. Converts heme B (protoheme IX) to heme O by substitution of the vinyl group on carbon 2 of heme B porphyrin ring with a hydroxyethyl farnesyl side group. This chain is Protoheme IX farnesyltransferase, found in Bacillus thuringiensis (strain Al Hakam).